A 60-amino-acid polypeptide reads, in one-letter code: Large ribosomal subunit protein uL30 (60 aa).

Belongs to the universal ribosomal protein uL30 family. Part of the 50S ribosomal subunit.

The sequence is that of Large ribosomal subunit protein uL30 from Streptomyces griseus subsp. griseus (strain JCM 4626 / CBS 651.72 / NBRC 13350 / KCC S-0626 / ISP 5235).